The following is a 316-amino-acid chain: Pantothenate kinase (316 aa).

ATP is bound at residue 95 to 102 (GSVAVGKS).

The protein belongs to the prokaryotic pantothenate kinase family.

Its subcellular location is the cytoplasm. The catalysed reaction is (R)-pantothenate + ATP = (R)-4'-phosphopantothenate + ADP + H(+). It participates in cofactor biosynthesis; coenzyme A biosynthesis; CoA from (R)-pantothenate: step 1/5. This is Pantothenate kinase from Enterobacter sp. (strain 638).